The following is a 293-amino-acid chain: Ribosomal protein L11 methyltransferase (293 aa).

Residues threonine 145, glycine 166, aspartate 188, and asparagine 230 each contribute to the S-adenosyl-L-methionine site.

The protein belongs to the methyltransferase superfamily. PrmA family.

It is found in the cytoplasm. The enzyme catalyses L-lysyl-[protein] + 3 S-adenosyl-L-methionine = N(6),N(6),N(6)-trimethyl-L-lysyl-[protein] + 3 S-adenosyl-L-homocysteine + 3 H(+). Functionally, methylates ribosomal protein L11. The chain is Ribosomal protein L11 methyltransferase from Enterobacter sp. (strain 638).